The sequence spans 283 residues: Elongation factor Ts (283 aa).

Residues 80–83 (TDFV) form an involved in Mg(2+) ion dislocation from EF-Tu region.

Belongs to the EF-Ts family.

It localises to the cytoplasm. Functionally, associates with the EF-Tu.GDP complex and induces the exchange of GDP to GTP. It remains bound to the aminoacyl-tRNA.EF-Tu.GTP complex up to the GTP hydrolysis stage on the ribosome. In Citrobacter koseri (strain ATCC BAA-895 / CDC 4225-83 / SGSC4696), this protein is Elongation factor Ts.